A 2435-amino-acid chain; its full sequence is MGFLHQLQLLLWKNVTLKRRSPWVLAFEIFIPLVLFFILLGLRQKKPTISVKEAFYTAAPLTSAGILPVMQSLCPDGQRDEFGFLQYANSTVTQLLERLDRVVEEGNLFDPARPSLGSELEALRQHLEALSAGPGTSGSHLDRSTVSSFSLDSVARNPQELWRFLTQNLSLPNSTAQALLAARVDPPEVYHLLFGPSSALDSQSGLHKGQEPWSRLGGNPLFRMEELLLAPALLEQLTCTPGSGELGRILTVPESQKGALQGYRDAVCSGQAAARARRFSGLSAELRNQLDVAKVSQQLGLDAPNGSDSSPQAPPPRRLQALLGDLLDAQKVLQDVDVLSALALLLPQGACTGRTPGPPASGAGGAANGTGAGAVMGPNATAEEGAPSAAALATPDTLQGQCSAFVQLWAGLQPILCGNNRTIEPEALRRGNMSSLGFTSKEQRNLGLLVHLMTSNPKILYAPAGSEVDRVILKANETFAFVGNVTHYAQVWLNISAEIRSFLEQGRLQQHLRWLQQYVAELRLHPEALNLSLDELPPALRQDNFSLPSGMALLQQLDTIDNAACGWIQFMSKVSVDIFKGFPDEESIVNYTLNQAYQDNVTVFASVIFQTRKDGSLPPHVHYKIRQNSSFTEKTNEIRRAYWRPGPNTGGRFYFLYGFVWIQDMMERAIIDTFVGHDVVEPGSYVQMFPYPCYTRDDFLFVIEHMMPLCMVISWVYSVAMTIQHIVAEKEHRLKEVMKTMGLNNAVHWVAWFITGFVQLSISVTALTAILKYGQVLMHSHVVIIWLFLAVYAVATIMFCFLVSVLYSKAKLASACGGIIYFLSYVPYMYVAIREEVAHDKITAFEKCIASLMSTTAFGLGSKYFALYEVAGVGIQWHTFSQSPVEGDDFNLLLAVTMLMVDAVVYGILTWYIEAVHPGMYGLPRPWYFPLQKSYWLGSGRTEAWEWSWPWARTPRLSVMEEDQACAMESRRFEETRGMEEEPTHLPLVVCVDKLTKVYKDDKKLALNKLSLNLYENQVVSFLGHNGAGKTTTMSILTGLFPPTSGSATIYGHDIRTEMDEIRKNLGMCPQHNVLFDRLTVEEHLWFYSRLKSMAQEEIRREMDKMIEDLELSNKRHSLVQTLSGGMKRKLSVAIAFVGGSRAIILDEPTAGVDPYARRAIWDLILKYKPGRTILLSTHHMDEADLLGDRIAIISHGKLKCCGSPLFLKGTYGDGYRLTLVKRPAEPGGPQEPGLASSPPGRAPLSSCSELQVSQFIRKHVASCLLVSDTSTELSYILPSEAAKKGAFERLFQHLERSLDALHLSSFGLMDTTLEEVFLKVSEEDQSLENSEADVKESRKDVLPGAEGPASGEGHAGNLARCSELTQSQASLQSASSVGSARGDEGAGYTDVYGDYRPLFDNPQDPDNVSLQEVEAEALSRVGQGSRKLDGGWLKVRQFHGLLVKRFHCARRNSKALFSQILLPAFFVCVAMTVALSVPEIGDLPPLVLSPSQYHNYTQPRGNFIPYANEERREYRLRLSPDASPQQLVSTFRLPSGVGATCVLKSPANGSLGPTLNLSSGESRLLAARFFDSMCLESFTQGLPLSNFVPPPPSPAPSDSPASPDEDLQAWNVSLPPTAGPEMWTSAPSLPRLVREPVRCTCSAQGTGFSCPSSVGGHPPQMRVVTGDILTDITGHNVSEYLLFTSDRFRLHRYGAITFGNVLKSIPASFGTRAPPMVRKIAVRRAAQVFYNNKGYHSMPTYLNSLNNAILRANLPKSKGNPAAYGITVTNHPMNKTSASLSLDYLLQGTDVVIAIFIIVAMSFVPASFVVFLVAEKSTKAKHLQFVSGCNPIIYWLANYVWDMLNYLVPATCCVIILFVFDLPAYTSPTNFPAVLSLFLLYGWSITPIMYPASFWFEVPSSAYVFLIVINLFIGITATVATFLLQLFEHDKDLKVVNSYLKSCFLIFPNYNLGHGLMEMAYNEYINEYYAKIGQFDKMKSPFEWDIVTRGLVAMAVEGVVGFLLTIMCQYNFLRRPQRMPVSTKPVEDDVDVASERQRVLRGDADNDMVKIENLTKVYKSRKIGRILAVDRLCLGVRPGECFGLLGVNGAGKTSTFKMLTGDESTTGGEAFVNGHSVLKELLQVQQSLGYCPQCDALFDELTAREHLQLYTRLRGISWKDEARVVKWALEKLELTKYADKPAGTYSGGNKRKLSTAIALIGYPAFIFLDEPTTGMDPKARRFLWNLILDLIKTGRSVVLTSHSMEECEALCTRLAIMVNGRLRCLGSIQHLKNRFGDGYMITVRTKSSQSVKDVVRFFNRNFPEAMLKERHHTKVQYQLKSEHISLAQVFSKMEQVSGVLGIEDYSVSQTTLDNVFVNFAKKQSDNLEQQETEPPSALQSPLGCLLSLLRPRSAPTELRALVADEPEDLDTEDEGLISFEEERAQLSFNTDTLC.

Asparagine 14 is a glycosylation site (N-linked (GlcNAc...) asparagine). A run of 2 helical transmembrane segments spans residues 22–42 (PWVL…LLGL) and 54–74 (AFYT…QSLC). 3 N-linked (GlcNAc...) asparagine glycosylation sites follow: asparagine 89, asparagine 168, and asparagine 173. Position 271 is an N5-methylglutamine (glutamine 271). Residues asparagine 305, asparagine 368, asparagine 379, asparagine 420, asparagine 432, asparagine 476, asparagine 484, asparagine 494, asparagine 530, asparagine 544, asparagine 590, asparagine 600, and asparagine 628 are each glycosylated (N-linked (GlcNAc...) asparagine). 6 helical membrane-spanning segments follow: residues 699 to 719 (FLFV…VYSV), 750 to 770 (VAWF…LTAI), 782 to 802 (VVII…FCFL), 813 to 833 (ASAC…YVAI), 857 to 877 (AFGL…GIQW), and 893 to 913 (LLAV…TWYI). The ABC transporter 1 domain maps to 990–1221 (VCVDKLTKVY…YGDGYRLTLV (232 aa)). 1024–1031 (GHNGAGKT) provides a ligand contact to ATP. 2 disordered regions span residues 1223–1243 (RPAE…PGRA) and 1325–1357 (DQSL…GHAG). Phosphoserine occurs at positions 1238, 1327, and 1331. Residues 1333-1342 (ADVKESRKDV) show a composition bias toward basic and acidic residues. Asparagine 1408 carries N-linked (GlcNAc...) asparagine glycosylation. Residues 1456–1476 (ALFSQILLPAFFVCVAMTVAL) traverse the membrane as a helical segment. N-linked (GlcNAc...) asparagine glycans are attached at residues asparagine 1496, asparagine 1549, and asparagine 1557. Residues 1586–1610 (SNFVPPPPSPAPSDSPASPDEDLQA) form a disordered region. A compositionally biased stretch (pro residues) spans 1589-1598 (VPPPPSPAPS). N-linked (GlcNAc...) asparagine glycosylation is found at asparagine 1612, asparagine 1677, and asparagine 1775. 5 consecutive transmembrane segments (helical) span residues 1792–1812 (VVIA…FVVF), 1841–1861 (VWDM…LFVF), 1872–1892 (FPAV…IMYP), 1905–1925 (VFLI…TFLL), and 1991–2011 (GLVA…MCQY). Residues 2050–2285 (VKIENLTKVY…FGDGYMITVR (236 aa)) enclose the ABC transporter 2 domain. Asparagine 2054 carries an N-linked (GlcNAc...) asparagine glycan. 2087–2094 (GVNGAGKT) serves as a coordination point for ATP. Residue threonine 2412 is modified to Phosphothreonine.

This sequence belongs to the ABC transporter superfamily. ABCA family. Methylated at Gln-271 by N6AMT1. In terms of tissue distribution, highly expressed in the brain,peripheral blood leukocytes and ovary, whereas lower levels of expression is observed in kidney and liver. As to expression, weakly expressed in brain and highly in peripheral blood leukocytes.

The protein resides in the endosome membrane. The protein localises to the lysosome membrane. In terms of biological role, probable lipid transporter that modulates cholesterol sequestration in the late endosome/lysosome by regulating the intracellular sphingolipid metabolism, in turn participates in cholesterol homeostasis. May alter the transbilayer distribution of ceramide in the intraluminal membrane lipid bilayer, favoring its retention in the outer leaflet that results in increased acid ceramidase activity in the late endosome/lysosome, facilitating ceramide deacylation to sphingosine leading to the sequestration of free cholesterol in lysosomes. In addition regulates amyloid-beta production either by activating a signaling pathway that regulates amyloid precursor protein transcription through the modulation of sphingolipid metabolism or through its role in gamma-secretase processing of APP. May play a role in myelin formation. This Homo sapiens (Human) protein is ATP-binding cassette sub-family A member 2.